The primary structure comprises 432 residues: Argininosuccinate lyase (432 aa).

It belongs to the lyase 1 family. Argininosuccinate lyase subfamily.

It is found in the cytoplasm. It catalyses the reaction 2-(N(omega)-L-arginino)succinate = fumarate + L-arginine. It functions in the pathway amino-acid biosynthesis; L-arginine biosynthesis; L-arginine from L-ornithine and carbamoyl phosphate: step 3/3. This Xanthomonas euvesicatoria pv. vesicatoria (strain 85-10) (Xanthomonas campestris pv. vesicatoria) protein is Argininosuccinate lyase.